Reading from the N-terminus, the 94-residue chain is CRISPR-associated endoribonuclease Cas2 1 (94 aa).

A Mg(2+)-binding site is contributed by Asp8.

The protein belongs to the CRISPR-associated endoribonuclease Cas2 protein family. Homodimer, forms a heterotetramer with a Cas1 homodimer. Mg(2+) serves as cofactor.

Functionally, CRISPR (clustered regularly interspaced short palindromic repeat), is an adaptive immune system that provides protection against mobile genetic elements (viruses, transposable elements and conjugative plasmids). CRISPR clusters contain sequences complementary to antecedent mobile elements and target invading nucleic acids. CRISPR clusters are transcribed and processed into CRISPR RNA (crRNA). Functions as a ssRNA-specific endoribonuclease. Involved in the integration of spacer DNA into the CRISPR cassette. This is CRISPR-associated endoribonuclease Cas2 1 from Synechocystis sp. (strain ATCC 27184 / PCC 6803 / Kazusa).